The following is a 105-amino-acid chain: BLOC-1-related complex subunit 7 (105 aa).

Belongs to the BORCS7 family. As to quaternary structure, component of the BLOC-one-related complex (BORC) which is composed of BLOC1S1, BLOC1S2, BORCS5, BORCS6, BORCS7, BORCS8, KXD1 and SNAPIN.

Its subcellular location is the lysosome membrane. Functionally, as part of the BORC complex may play a role in lysosomes movement and localization at the cell periphery. Associated with the cytosolic face of lysosomes, the BORC complex may recruit ARL8B and couple lysosomes to microtubule plus-end-directed kinesin motor. This Mus musculus (Mouse) protein is BLOC-1-related complex subunit 7.